The following is a 113-amino-acid chain: Parvalbumin beta (113 aa).

Position 1 is an N-acetylalanine (Ala-1). S-linked (Glc) cysteine glycosylation occurs at Cys-18. EF-hand domains follow at residues 38-73 (FSADELKKLFKIADEDKEGFIEEDELKLFLIAFAAD) and 77-112 (LTDAETKAFLKAGDSDGDGKIGVDEFGALVDKWGAK). Residues Asp-51, Asp-53, Glu-55, Phe-57, Glu-59, Glu-62, Asp-90, Asp-92, Asp-94, Lys-96, and Glu-101 each coordinate Ca(2+).

The protein belongs to the parvalbumin family. In terms of tissue distribution, muscle (at protein level).

In terms of biological role, in muscle, parvalbumin is thought to be involved in relaxation after contraction. It binds two calcium ions. The sequence is that of Parvalbumin beta from Gadus morhua subsp. callarias (Baltic cod).